Consider the following 186-residue polypeptide: ADP-ribosylation factor-like protein 8A (186 aa).

Positions M1 to E19 form an intramembrane region, note=Mediates targeting to membranes. GTP is bound by residues Q29 to T35, D71 to Q75, and N130 to D133.

This sequence belongs to the small GTPase superfamily. Arf family.

Its subcellular location is the late endosome membrane. It is found in the lysosome membrane. It localises to the cytoplasm. The protein resides in the cytoskeleton. The protein localises to the spindle. Its subcellular location is the cell projection. It is found in the axon. It localises to the synapse. Functionally, plays a role in lysosome motility. In neurons, mediates the anterograde axonal long-range transport of presynaptic lysosome-related vesicles required for presynaptic biogenesis and synaptic function. May play a role in chromosome segregation. The sequence is that of ADP-ribosylation factor-like protein 8A (ARL8A) from Gallus gallus (Chicken).